Here is a 142-residue protein sequence, read N- to C-terminus: Large ribosomal subunit protein uL11 (142 aa).

This sequence belongs to the universal ribosomal protein uL11 family. In terms of assembly, part of the ribosomal stalk of the 50S ribosomal subunit. Interacts with L10 and the large rRNA to form the base of the stalk. L10 forms an elongated spine to which L12 dimers bind in a sequential fashion forming a multimeric L10(L12)X complex. Post-translationally, one or more lysine residues are methylated.

Functionally, forms part of the ribosomal stalk which helps the ribosome interact with GTP-bound translation factors. In Shewanella sp. (strain W3-18-1), this protein is Large ribosomal subunit protein uL11.